Reading from the N-terminus, the 94-residue chain is Pyrimidine/purine nucleoside phosphorylase (94 aa).

Belongs to the nucleoside phosphorylase PpnP family.

The catalysed reaction is a purine D-ribonucleoside + phosphate = a purine nucleobase + alpha-D-ribose 1-phosphate. It catalyses the reaction adenosine + phosphate = alpha-D-ribose 1-phosphate + adenine. The enzyme catalyses cytidine + phosphate = cytosine + alpha-D-ribose 1-phosphate. It carries out the reaction guanosine + phosphate = alpha-D-ribose 1-phosphate + guanine. The catalysed reaction is inosine + phosphate = alpha-D-ribose 1-phosphate + hypoxanthine. It catalyses the reaction thymidine + phosphate = 2-deoxy-alpha-D-ribose 1-phosphate + thymine. The enzyme catalyses uridine + phosphate = alpha-D-ribose 1-phosphate + uracil. It carries out the reaction xanthosine + phosphate = alpha-D-ribose 1-phosphate + xanthine. Catalyzes the phosphorolysis of diverse nucleosides, yielding D-ribose 1-phosphate and the respective free bases. Can use uridine, adenosine, guanosine, cytidine, thymidine, inosine and xanthosine as substrates. Also catalyzes the reverse reactions. This Citrobacter koseri (strain ATCC BAA-895 / CDC 4225-83 / SGSC4696) protein is Pyrimidine/purine nucleoside phosphorylase.